Here is a 281-residue protein sequence, read N- to C-terminus: Phosphoglycerate mutase-like protein AT74H (281 aa).

H17 serves as the catalytic Tele-phosphohistidine intermediate. E109 functions as the Proton donor/acceptor in the catalytic mechanism.

It belongs to the phosphoglycerate mutase family.

May play a role in carbohydrates metabolism. The chain is Phosphoglycerate mutase-like protein AT74H from Arabidopsis thaliana (Mouse-ear cress).